The chain runs to 141 residues: Cholinesterase (141 aa).

Asparagine 39 is a glycosylation site (N-linked (GlcNAc...) asparagine). 49 to 50 (GG) serves as a coordination point for substrate. The active-site Acyl-ester intermediate is the serine 131. Position 131 is a phosphoserine (serine 131).

It belongs to the type-B carboxylesterase/lipase family. Homotetramer; disulfide-linked. Dimer of dimers. As to expression, present in most cells except erythrocytes.

Its subcellular location is the secreted. It catalyses the reaction an acylcholine + H2O = a carboxylate + choline + H(+). Its function is as follows. Esterase with broad substrate specificity. Contributes to the inactivation of the neurotransmitter acetylcholine. Can degrade neurotoxic organophosphate esters. The protein is Cholinesterase (BCHE) of Macaca mulatta (Rhesus macaque).